Reading from the N-terminus, the 604-residue chain is Nuclear factor erythroid 2-related factor 2 (604 aa).

A DLG motif motif is present at residues 29–31 (DLG). At S40 the chain carries Phosphoserine; by PKC. Positions 79 to 82 (ETGE) match the ETGE motif motif. At S214 the chain carries Phosphoserine. A disordered region spans residues 334–447 (TVEFNDSDSG…VPFTKDKHSS (114 aa)). Composition is skewed to polar residues over residues 340–352 (SDSGISLNTSPSR) and 395–407 (PTHSSGDTVQPLS). K461, K471, and K486 each carry an N-linked (Glc) (glycation) lysine glycan. The bZIP domain maps to 496–559 (LIRDIRRRGK…HLLKRKLSTL (64 aa)). N-linked (Glc) (glycation) arginine glycosylation is present at R498. The basic motif stretch occupies residues 498 to 517 (RDIRRRGKNKVAAQNCRKRK). The interval 521 to 528 (IVELEQDL) is leucine-zipper. Residue R568 is glycosylated (N-linked (Glc) (glycation) arginine). Residues 570-604 (EDGKPYSPSEYSLQQTRDGNVFLVPKSKKPDTKKN) form a disordered region. K573 carries N-linked (Glc) (glycation) lysine glycosylation. Residues 578–587 (SEYSLQQTRD) are compositionally biased toward polar residues. The interval 590–595 (VFLVPK) is mediates interaction with CHD6 and is necessary to activate transcription. 2 positions are modified to N6-acetyllysine; by CREBBP: K595 and K598.

It belongs to the bZIP family. CNC subfamily. In terms of assembly, heterodimer; heterodimerizes with small Maf proteins. Interacts (via the bZIP domain) with MAFG and MAFK; required for binding to antioxidant response elements (AREs) on DNA. Interacts with KEAP1; the interaction is direct and promotes ubiquitination by the BCR(KEAP1) E3 ubiquitin ligase complex. Forms a ternary complex with PGAM5 and KEAP1. Interacts with EEF1D at heat shock promoter elements (HSE). Interacts via its leucine-zipper domain with the coiled-coil domain of PMF1. Interacts with CHD6; involved in activation of the transcription. Interacts with ESRRB; represses NFE2L2 transcriptional activity. Interacts with MOTS-c, a peptide produced by the mitochondrially encoded 12S rRNA MT-RNR1; the interaction occurs in the nucleus following metabolic stress. In terms of processing, ubiquitinated in the cytoplasm by the BCR(KEAP1) E3 ubiquitin ligase complex leading to its degradation. In response to oxidative stress, electrophile metabolites, such as sulforaphane, modify KEAP1, leading to inhibit activity of the BCR(KEAP1) complex, promoting NFE2L2/NRF2 nuclear accumulation and activity. In response to autophagy, the BCR(KEAP1) complex is inactivated. Phosphorylated by EIF2AK3/PERK following unfolded protein response (UPR), promoting dissociation from its cytoplasmic inhibitor KEAP1, followed by its translocation into the nucleus. Phosphorylation of Ser-40 by PKC in response to oxidative stress dissociates NFE2L2 from its cytoplasmic inhibitor KEAP1, promoting its translocation into the nucleus. Post-translationally, acetylation at Lys-595 and Lys-598 increases nuclear localization whereas deacetylation by SIRT1 enhances cytoplasmic presence. In terms of processing, glycation impairs transcription factor activity by preventing heterodimerization with small Maf proteins. Deglycation by FN3K restores activity.

The protein localises to the cytoplasm. It is found in the cytosol. The protein resides in the nucleus. Functionally, transcription factor that plays a key role in the response to oxidative stress: binds to antioxidant response (ARE) elements present in the promoter region of many cytoprotective genes, such as phase 2 detoxifying enzymes, and promotes their expression, thereby neutralizing reactive electrophiles. In normal conditions, ubiquitinated and degraded in the cytoplasm by the BCR(KEAP1) complex. In response to oxidative stress, electrophile metabolites inhibit activity of the BCR(KEAP1) complex, promoting nuclear accumulation of NFE2L2/NRF2, heterodimerization with one of the small Maf proteins and binding to ARE elements of cytoprotective target genes. The NFE2L2/NRF2 pathway is also activated in response to selective autophagy: autophagy promotes interaction between KEAP1 and SQSTM1/p62 and subsequent inactivation of the BCR(KEAP1) complex, leading to NFE2L2/NRF2 nuclear accumulation and expression of cytoprotective genes. The NFE2L2/NRF2 pathway is also activated during the unfolded protein response (UPR), contributing to redox homeostasis and cell survival following endoplasmic reticulum stress. May also be involved in the transcriptional activation of genes of the beta-globin cluster by mediating enhancer activity of hypersensitive site 2 of the beta-globin locus control region. Also plays an important role in the regulation of the innate immune response. It is a critical regulator of the innate immune response and survival during sepsis by maintaining redox homeostasis and restraint of the dysregulation of pro-inflammatory signaling pathways like MyD88-dependent and -independent and TNF-alpha signaling. Suppresses macrophage inflammatory response by blocking pro-inflammatory cytokine transcription and the induction of IL6. Binds to the proximity of pro-inflammatory genes in macrophages and inhibits RNA Pol II recruitment. The inhibition is independent of the Nrf2-binding motif and reactive oxygen species level. Represses antiviral cytosolic DNA sensing by suppressing the expression of the adapter protein STING1 and decreasing responsiveness to STING1 agonists while increasing susceptibility to infection with DNA viruses. The polypeptide is Nuclear factor erythroid 2-related factor 2 (Rattus norvegicus (Rat)).